The primary structure comprises 233 residues: UPF0725 protein At4g17990 (233 aa).

It belongs to the UPF0725 (EMB2204) family.

This is UPF0725 protein At4g17990 from Arabidopsis thaliana (Mouse-ear cress).